A 282-amino-acid polypeptide reads, in one-letter code: NADH-ubiquinone oxidoreductase chain 2 (282 aa).

Helical transmembrane passes span 17–37 (ILTN…VVFI), 58–78 (SLGL…IILL), 87–107 (FWIF…FLTF), 115–135 (ILLQ…LLIC), 166–186 (FSMF…VLLI), 202–222 (TTLV…IFSL), and 232–252 (FTLF…FWLI).

It belongs to the complex I subunit 2 family.

The protein resides in the mitochondrion inner membrane. It carries out the reaction a ubiquinone + NADH + 5 H(+)(in) = a ubiquinol + NAD(+) + 4 H(+)(out). In terms of biological role, core subunit of the mitochondrial membrane respiratory chain NADH dehydrogenase (Complex I) that is believed to belong to the minimal assembly required for catalysis. Complex I functions in the transfer of electrons from NADH to the respiratory chain. The immediate electron acceptor for the enzyme is believed to be ubiquinone. This chain is NADH-ubiquinone oxidoreductase chain 2, found in Caenorhabditis elegans.